Consider the following 290-residue polypeptide: Probable aquaporin PIP2-7 (290 aa).

A run of 2 helical transmembrane segments spans residues 45-65 (ALIA…ATVI) and 79-99 (GVGY…LVYC). An NPA 1 motif is present at residues 109 to 111 (NPA). The next 3 membrane-spanning stretches (helical) occupy residues 128-148 (VLYV…VKGI), 168-188 (SAAG…YTVF), and 202-222 (IPVL…LATI). The NPA 2 signature appears at 230-232 (NPA). Residues 252-272 (IFWVGPVIGAFLAAAYHKLVL) form a helical membrane-spanning segment.

This sequence belongs to the MIP/aquaporin (TC 1.A.8) family. PIP (TC 1.A.8.11) subfamily. In terms of tissue distribution, expressed in roots.

It localises to the cell membrane. Aquaporins facilitate the transport of water and small neutral solutes across cell membranes. This is Probable aquaporin PIP2-7 (PIP2-7) from Oryza sativa subsp. japonica (Rice).